We begin with the raw amino-acid sequence, 557 residues long: Potassium-transporting ATPase potassium-binding subunit (557 aa).

Transmembrane regions (helical) follow at residues 5-25, 63-83, 132-152, 170-190, 253-273, 283-303, 329-349, 356-376, 379-399, 416-436, 484-504, and 526-546; these read GFLLIATFLLVLMVLARPLGS, LCAILGLNMLGLAVLFFMLLG, GLTVQNFLSAASGIAVIFALI, LLRITLWVLVPVALLIALFFI, FVQMLAIFLIPTALCFAFGEV, LLWAMSVIFVICVGVVMWAEV, VLVSSLFAVVTTAASCGAVIA, ALGGMVPMWLMQIGEVVFGGV, GLYGMMLFVLLAVFIAGLMIG, LTALAILVTPTLVLMGAALAM, LLAFCMFVGRFGVIIPVMAIA, and LFVGLLIGTVLLVGALTFIPA.

This sequence belongs to the KdpA family. In terms of assembly, the system is composed of three essential subunits: KdpA, KdpB and KdpC.

It localises to the cell inner membrane. Its function is as follows. Part of the high-affinity ATP-driven potassium transport (or Kdp) system, which catalyzes the hydrolysis of ATP coupled with the electrogenic transport of potassium into the cytoplasm. This subunit binds the periplasmic potassium ions and delivers the ions to the membrane domain of KdpB through an intramembrane tunnel. In Escherichia coli (strain SE11), this protein is Potassium-transporting ATPase potassium-binding subunit.